Here is a 447-residue protein sequence, read N- to C-terminus: Multidrug efflux pump SdrM (447 aa).

14 consecutive transmembrane segments (helical) span residues 6 to 26 (IITV…SSII), 42 to 62 (LISL…PIVG), 70 to 90 (IIYV…MCGL), 94 to 114 (FTML…LMSL), 134 to 154 (IVGS…GGIL), 161 to 181 (WLFY…IWTF), 194 to 214 (FDTK…FALL), 217 to 237 (QLLL…MCLF), 260 to 280 (VFIT…YIPV), 286 to 306 (LGLS…AWIT), 323 to 342 (IYLL…SFGI), 346 to 363 (VLIA…GYIY), 392 to 412 (LGAS…SGIF), and 418 to 438 (NVLS…VVFF).

This sequence belongs to the major facilitator superfamily.

The protein localises to the cell membrane. Its function is as follows. Energy-dependent drug efflux pump that increases resistance to antimicrobial agents such as norfloxacin, acriflavine and ethidium bromide. This Staphylococcus aureus (strain N315) protein is Multidrug efflux pump SdrM.